The sequence spans 104 residues: Large ribosomal subunit protein uL24 (104 aa).

It belongs to the universal ribosomal protein uL24 family. Part of the 50S ribosomal subunit.

Functionally, one of two assembly initiator proteins, it binds directly to the 5'-end of the 23S rRNA, where it nucleates assembly of the 50S subunit. One of the proteins that surrounds the polypeptide exit tunnel on the outside of the subunit. The protein is Large ribosomal subunit protein uL24 of Rhodopseudomonas palustris (strain BisB18).